A 331-amino-acid chain; its full sequence is Olfactory receptor 6S1 (331 aa).

Residues 1–29 (MSPDGNHSSDPTEFVLAGLPNLNSARVEL) are Extracellular-facing. Residue N6 is glycosylated (N-linked (GlcNAc...) asparagine). The chain crosses the membrane as a helical span at residues 30–50 (FSVFLLVYLLNLTGNVLIVGV). The Cytoplasmic portion of the chain corresponds to 51 to 59 (VRADTRLQT). The helical transmembrane segment at 60 to 80 (PMYFFLGNLSCLEILLTSVII) threads the bilayer. Residues 81–99 (PKMLSNFLSRQHTISFAAC) lie on the Extracellular side of the membrane. C99 and C182 form a disulfide bridge. Residues 100-120 (ITQFYFYFFLGASEFLLLAVM) traverse the membrane as a helical segment. At 121–147 (SADRYLAICHPLRYPLLMSGAVCFRVA) the chain is on the cytoplasmic side. The helical transmembrane segment at 148–168 (LACWVGGLVPVLGPTVAVALL) threads the bilayer. Residues 169-207 (PFCKQGAVVQHFFCDSGPLLRLACTNTKKLEETDFVLAS) are Extracellular-facing. The helical transmembrane segment at 208–228 (LVIVSSLLITAVSYGLIVLAV) threads the bilayer. At 229–242 (LSIPSASGRQKAFS) the chain is on the cytoplasmic side. A helical transmembrane segment spans residues 243-263 (TCTSHLIVVTLFYGSAIFLYV). The Extracellular segment spans residues 264–274 (RPSQSGSVDTN). A helical membrane pass occupies residues 275–295 (WAVTVITTFVTPLLNPFIYAL). The Cytoplasmic portion of the chain corresponds to 296 to 331 (RNEQVKEALKDMFRKVVAGVLGNLLLDKCLSEKAVK).

This sequence belongs to the G-protein coupled receptor 1 family.

The protein localises to the cell membrane. Its function is as follows. Odorant receptor. The protein is Olfactory receptor 6S1 (OR6S1) of Homo sapiens (Human).